Consider the following 548-residue polypeptide: Chaperonin GroEL (548 aa).

Residues 29 to 32 (TLGP), K50, 86 to 90 (DGTTT), G416, and D497 each bind ATP.

The protein belongs to the chaperonin (HSP60) family. In terms of assembly, forms a cylinder of 14 subunits composed of two heptameric rings stacked back-to-back. Interacts with the co-chaperonin GroES.

Its subcellular location is the cytoplasm. It carries out the reaction ATP + H2O + a folded polypeptide = ADP + phosphate + an unfolded polypeptide.. Its function is as follows. Together with its co-chaperonin GroES, plays an essential role in assisting protein folding. The GroEL-GroES system forms a nano-cage that allows encapsulation of the non-native substrate proteins and provides a physical environment optimized to promote and accelerate protein folding. This Neorickettsia sennetsu (strain ATCC VR-367 / Miyayama) (Ehrlichia sennetsu) protein is Chaperonin GroEL.